A 352-amino-acid chain; its full sequence is UDP-3-O-acylglucosamine N-acyltransferase (352 aa).

His-257 (proton acceptor) is an active-site residue.

The protein belongs to the transferase hexapeptide repeat family. LpxD subfamily. As to quaternary structure, homotrimer.

The enzyme catalyses a UDP-3-O-[(3R)-3-hydroxyacyl]-alpha-D-glucosamine + a (3R)-hydroxyacyl-[ACP] = a UDP-2-N,3-O-bis[(3R)-3-hydroxyacyl]-alpha-D-glucosamine + holo-[ACP] + H(+). Its pathway is bacterial outer membrane biogenesis; LPS lipid A biosynthesis. In terms of biological role, catalyzes the N-acylation of UDP-3-O-acylglucosamine using 3-hydroxyacyl-ACP as the acyl donor. Is involved in the biosynthesis of lipid A, a phosphorylated glycolipid that anchors the lipopolysaccharide to the outer membrane of the cell. The polypeptide is UDP-3-O-acylglucosamine N-acyltransferase (Methylobacterium nodulans (strain LMG 21967 / CNCM I-2342 / ORS 2060)).